Here is a 318-residue protein sequence, read N- to C-terminus: Protease HtpX homolog (318 aa).

Transmembrane regions (helical) follow at residues 1–21 (MLEA…VGRL), 35–55 (ILGL…GSAI), and 56–76 (AGLV…SRIV). Position 167 (H167) interacts with Zn(2+). The active site involves E168. H171 provides a ligand contact to Zn(2+). The next 2 helical transmembrane spans lie at 178-198 (LVMT…DPWL) and 209-229 (IAFL…LVAA). E235 serves as a coordination point for Zn(2+).

This sequence belongs to the peptidase M48B family. It depends on Zn(2+) as a cofactor.

The protein resides in the cell membrane. The sequence is that of Protease HtpX homolog from Methanopyrus kandleri (strain AV19 / DSM 6324 / JCM 9639 / NBRC 100938).